Consider the following 490-residue polypeptide: Adenylyltransferase and sulfurtransferase uba4 (490 aa).

Residues 33 to 54 (EAAKTPPYSDSTETDRGSSSST) are disordered. ATP is bound by residues Gly96, Asp117, 124–128 (SNLHR), Lys141, and 185–186 (DH). Residues Cys234 and Cys237 each coordinate Zn(2+). Cys251 functions as the Glycyl thioester intermediate; for adenylyltransferase activity in the catalytic mechanism. Residues Cys323 and Cys326 each coordinate Zn(2+). Positions 379-488 (EHGKPVLLDV…WKREVDSTLP (110 aa)) constitute a Rhodanese domain. Cys443 (cysteine persulfide intermediate; for sulfurtransferase activity) is an active-site residue.

It in the N-terminal section; belongs to the HesA/MoeB/ThiF family. UBA4 subfamily. Zn(2+) serves as cofactor.

The protein localises to the cytoplasm. It is found in the cytosol. It carries out the reaction [molybdopterin-synthase sulfur-carrier protein]-C-terminal Gly-Gly + ATP + H(+) = [molybdopterin-synthase sulfur-carrier protein]-C-terminal Gly-Gly-AMP + diphosphate. It catalyses the reaction [molybdopterin-synthase sulfur-carrier protein]-C-terminal Gly-Gly-AMP + S-sulfanyl-L-cysteinyl-[cysteine desulfurase] + AH2 = [molybdopterin-synthase sulfur-carrier protein]-C-terminal-Gly-aminoethanethioate + L-cysteinyl-[cysteine desulfurase] + A + AMP + 2 H(+). The protein operates within tRNA modification; 5-methoxycarbonylmethyl-2-thiouridine-tRNA biosynthesis. In terms of biological role, plays a central role in 2-thiolation of mcm(5)S(2)U at tRNA wobble positions of cytosolic tRNA(Lys), tRNA(Glu) and tRNA(Gln). Also essential during biosynthesis of the molybdenum cofactor. Acts by mediating the C-terminal thiocarboxylation of sulfur carriers URM1 and MOCS2A. Its N-terminus first activates urm1 and MOCS2A as acyl-adenylates (-COAMP), then the persulfide sulfur on the catalytic cysteine is transferred to URM1 and MOCS2A to form thiocarboxylation (-COSH) of their C-terminus. The reaction probably involves hydrogen sulfide that is generated from the persulfide intermediate and that acts as a nucleophile towards URM1 and MOCS2A. Subsequently, a transient disulfide bond is formed. Does not use thiosulfate as sulfur donor; NFS1 probably acting as a sulfur donor for thiocarboxylation reactions. This is Adenylyltransferase and sulfurtransferase uba4 from Pyricularia oryzae (strain 70-15 / ATCC MYA-4617 / FGSC 8958) (Rice blast fungus).